A 354-amino-acid polypeptide reads, in one-letter code: Heat-inducible transcription repressor HrcA (354 aa).

Belongs to the HrcA family.

Negative regulator of class I heat shock genes (grpE-dnaK-dnaJ and groELS operons). Prevents heat-shock induction of these operons. This chain is Heat-inducible transcription repressor HrcA, found in Herpetosiphon aurantiacus (strain ATCC 23779 / DSM 785 / 114-95).